A 39-amino-acid polypeptide reads, in one-letter code: Photosystem II reaction center protein Y (39 aa).

A helical transmembrane segment spans residues Val-5–Ile-23.

This sequence belongs to the PsbY family. PSII is composed of 1 copy each of membrane proteins PsbA, PsbB, PsbC, PsbD, PsbE, PsbF, PsbH, PsbI, PsbJ, PsbK, PsbL, PsbM, PsbT, PsbX, PsbY, PsbZ, Psb30/Ycf12, peripheral proteins PsbO, CyanoQ (PsbQ), PsbU, PsbV and a large number of cofactors. It forms dimeric complexes.

It localises to the cellular thylakoid membrane. In terms of biological role, loosely associated component of the core of photosystem II (PSII), it is not always seen in crystals. PSII is a light-driven water plastoquinone oxidoreductase, using light energy to abstract electrons from H(2)O, generating a proton gradient subsequently used for ATP formation. In Microcystis aeruginosa (strain NIES-843 / IAM M-2473), this protein is Photosystem II reaction center protein Y.